The following is a 438-amino-acid chain: Trigger factor (438 aa).

Residues 163-248 enclose the PPIase FKBP-type domain; it reads GDTAIIDFAG…VKEIKRKEIA (86 aa).

Belongs to the FKBP-type PPIase family. Tig subfamily.

It localises to the cytoplasm. It catalyses the reaction [protein]-peptidylproline (omega=180) = [protein]-peptidylproline (omega=0). Involved in protein export. Acts as a chaperone by maintaining the newly synthesized protein in an open conformation. Functions as a peptidyl-prolyl cis-trans isomerase. The protein is Trigger factor of Pelotomaculum thermopropionicum (strain DSM 13744 / JCM 10971 / SI).